The primary structure comprises 99 residues: Putative UPF0320 protein YDR543C (99 aa).

The disordered stretch occupies residues 80–99; it reads EKSPPKSPKHKNILSFNNNT.

Belongs to the UPF0320 family.

The sequence is that of Putative UPF0320 protein YDR543C from Saccharomyces cerevisiae (strain ATCC 204508 / S288c) (Baker's yeast).